A 637-amino-acid polypeptide reads, in one-letter code: Keratin, type II cytoskeletal 1 (637 aa).

Residues 1–187 form a head region; sequence MSLQCSSRSL…DPQIQKVKSQ (187 aa). The residue at position 12 (R12) is an Omega-N-methylarginine. Residues S21 and S24 each carry the phosphoserine modification. R49 carries the post-translational modification Omega-N-methylarginine. At S67 the chain carries Phosphoserine. Residues 180 to 328 adopt a coiled-coil conformation; the sequence is QIQKVKSQER…DIDFFSALYQ (149 aa). The tract at residues 188-223 is coil 1A; sequence EREQIKSLNDKFASFIDKVRFLEQQNQVLQTKWELL. Positions 188 to 501 constitute an IF rod domain; that stretch reads EREQIKSLND…KLLEGEEIRM (314 aa). A linker 1 region spans residues 224–243; it reads QQVDTTTRTQNLDPFFENYI. The coil 1B stretch occupies residues 244 to 334; it reads SILRRKVDSL…ALYQMEMSQM (91 aa). K284 is modified (N6,N6-dimethyllysine). Residues 335 to 358 form a linker 12 region; sequence QTQISETNVVLSMDNNRSLDLDGI. Residue S352 is modified to Phosphoserine. Residues 359–497 form a coil 2 region; that stretch reads ISEVKAQYDS…ATYKKLLEGE (139 aa). Residues 397 to 483 are a coiled coil; it reads DSVRNTKMEI…QELMNTKLAL (87 aa). Residues 498–637 are tail; sequence EIRMSGECTP…VSTSYSRGTK (140 aa). 2 disordered regions span residues 505–533 and 563–637; these read CTPN…SGGG and YGGG…RGTK. Residues 509-524 show a composition bias toward low complexity; that stretch reads VSVSVSTSHTSMSGSS. 3 positions are modified to omega-N-methylarginine: R526, R585, and R607. Positions 563–618 are enriched in gly residues; that stretch reads YGGGSGGGSYGGGSGGGSSGSHRGGSGGGGGSSGGSYGGSSGGGRGGSSSGGGGVK. Residues 624 to 637 show a composition bias toward polar residues; sequence TVKFVSTSYSRGTK.

Belongs to the intermediate filament family. Heterotetramer of two type I and two type II keratins. Heterodimer with KRT10. Two heterodimers of KRT1 and KRT10 form a heterotetramer. Forms a heterodimer with KRT14; the interaction is more abundant in the absence of KRT5. Interacts with PLEC isoform 1C, when in a heterodimer with KRT10. Interacts with ITGB1 in the presence of RACK1 and SRC, and with RACK1. Interacts with C1QBP; the association represents a cell surface kininogen receptor. Interacts with EPPK1; interaction is dependent of higher-order structure of intermediate filament. In terms of processing, undergoes deimination of some arginine residues (citrullination). Expressed in the infundibular regions of the ear, the interfollicular epidermis of the back, in the interscale regions containing hair follicles in the tail, and in the soles of the footpads (at protein level).

It is found in the cell membrane. The protein resides in the cytoplasm. Functionally, may regulate the activity of kinases such as PKC and SRC via binding to integrin beta-1 (ITB1) and the receptor of activated protein C kinase 1 (RACK1). In complex with C1QBP is a high affinity receptor for kininogen-1/HMWK. This Mus musculus (Mouse) protein is Keratin, type II cytoskeletal 1 (Krt1).